The primary structure comprises 346 residues: Phosphate-binding protein PstS (346 aa).

The first 25 residues, 1-25 (MKVMRTTVATVVAATLSMSAFSVFA), serve as a signal peptide directing secretion. Residues 34–36 (ATF), Ser63, Asp81, and 164–166 (SGT) contribute to the phosphate site.

The protein belongs to the PstS family. The complex is composed of two ATP-binding proteins (PstB), two transmembrane proteins (PstC and PstA) and a solute-binding protein (PstS).

Its subcellular location is the periplasm. Part of the ABC transporter complex PstSACB involved in phosphate import. The protein is Phosphate-binding protein PstS (pstS) of Escherichia coli (strain K12).